We begin with the raw amino-acid sequence, 210 residues long: DNA-directed RNA polymerase III subunit rpc31 (210 aa).

A Phosphoserine modification is found at serine 103. A disordered region spans residues 151-210 (KDESSEAAHPNIEEEPDEGLEEEDEDFGDDDDNDYGENYFDNGEGDDYDDYDGDEGAIYE). 2 stretches are compositionally biased toward acidic residues: residues 163 to 185 (EEEPDEGLEEEDEDFGDDDDNDY) and 193 to 210 (GEGDDYDDYDGDEGAIYE).

The protein belongs to the eukaryotic RPC7 RNA polymerase subunit family. As to quaternary structure, component of the RNA polymerase III (Pol III) complex.

Its subcellular location is the cytoplasm. The protein localises to the nucleus. Functionally, DNA-dependent RNA polymerase catalyzes the transcription of DNA into RNA using the four ribonucleoside triphosphates as substrates. Specific peripheric component of RNA polymerase III which synthesizes small RNAs, such as 5S rRNA and tRNAs. The sequence is that of DNA-directed RNA polymerase III subunit rpc31 (rpc31) from Schizosaccharomyces pombe (strain 972 / ATCC 24843) (Fission yeast).